Reading from the N-terminus, the 78-residue chain is Serine rich endogenous peptide 12 (78 aa).

Positions Met1 to Cys24 are cleaved as a signal peptide. Positions Arg25 to Arg43 are cleaved as a propeptide — removed in mature form. Residues Ser47 to Tyr78 form a disordered region. The SCOOP motif motif lies at Ser50 to Arg64. The short motif at Ser56–Ser58 is the SxS motif essential for MIK2 binding element.

It belongs to the serine rich endogenous peptide (SCOOP) phytocytokine family. Interacts with MIK2 (via extracellular leucine-rich repeat domain); this interaction triggers the formation of complex between MIK2 and the BAK1/SERK3 and SERK4 coreceptors, and subsequent BAK1 activation by phosphorylation on 'Ser-612'. As to expression, mostly expressed in the whole root system, and, to a lower extent, in seedlings shoots.

It is found in the cell membrane. The protein resides in the secreted. Its subcellular location is the extracellular space. It localises to the apoplast. Its function is as follows. Brassicaceae-specific phytocytokine (plant endogenous peptide released into the apoplast) perceived by MIK2 in a BAK1/SERK3 and SERK4 coreceptors-dependent manner, that modulates various physiological and antimicrobial processes including root growth prevention, phospholipid signaling pathway activation (e.g. accumulation of phosphatidic acid (PA), but transient reduction of phosphatidylinositol 4,5-bisphosphate (PIP(2)) levels) and reactive oxygen species (ROS) response regulation. Moderates primary root growth, and regulates root meristems and cell elongation; this root growth regulation is associated with the modulation of ROS metabolism and alteration of cell wall structure, and depends on variations in many genes expression. Promotes ROS (e.g. superoxide anion O(2) and hydrogen peroxide H(2)O(2)) production and MAPK (e.g. MPK3, MPK4 and MPK6) activation in a MIK2-dependent manner, thus leading to the up-regulation of immune-related marker genes (e.g. WRKY30, WRKY33 and CYP81F2). Involved in biotic and oxidative stress responses; acts as a negative regulator of defense against necrotrophic pathogens such as the bacteria Erwinia amylovora and the fungus Alternaria brassicicola. Able to prime defense responses against the pathogenic bacteria Pseudomonas syringae pv. tomato DC3000. Contributes to the triggering of defense responses toward generalist herbivores such as Spodoptera littoralis, probably via the activation of jasmonate and indole glucosinolate biosynthesis. Triggers the expression of several PROSCOOP genes (e.g. PROSCOOP3, PROSCOOP7, PROSCOOP12 and PROSCOOP13). The chain is Serine rich endogenous peptide 12 from Arabidopsis thaliana (Mouse-ear cress).